Consider the following 131-residue polypeptide: Hypocretin neuropeptide precursor (131 aa).

A Pyrrolidone carboxylic acid modification is found at Gln34. Disulfide bonds link Cys39–Cys45 and Cys40–Cys47. Leu66 carries the post-translational modification Leucine amide. The interval 104-131 (EPALRPCSGRRCPSEAASSVAPGGRSGV) is disordered.

It belongs to the orexin family.

It is found in the rough endoplasmic reticulum. It localises to the cytoplasmic vesicle. Its subcellular location is the synapse. Functionally, neuropeptides that play a significant role in the regulation of food intake and sleep-wakefulness, possibly by coordinating the complex behavioral and physiologic responses of these complementary homeostatic functions. A broader role in the homeostatic regulation of energy metabolism, autonomic function, hormonal balance and the regulation of body fluids, is also suggested. In terms of biological role, binds to orexin receptors HCRTR1/OX1R and HCRTR2/OX2R with a high affinity. Stimulates food intake. Modulates pituitary luteinizing hormone secretion in an ovarian steroid-dependent manner. Its function is as follows. Binds to orexin receptor HCRTR2/OX2R only. Stimulates food intake. Modulates pituitary luteinizing hormone secretion in an ovarian steroid-dependent manner. In Bos taurus (Bovine), this protein is Hypocretin neuropeptide precursor (HCRT).